Reading from the N-terminus, the 236-residue chain is UPF0173 metal-dependent hydrolase DSY1309 (236 aa).

This sequence belongs to the UPF0173 family.

The protein is UPF0173 metal-dependent hydrolase DSY1309 of Desulfitobacterium hafniense (strain Y51).